The primary structure comprises 38 residues: Putative defensin-like protein 105 (38 aa).

3 disulfide bridges follow: cysteine 5/cysteine 27, cysteine 13/cysteine 33, and cysteine 17/cysteine 34.

This sequence belongs to the DEFL family.

This chain is Putative defensin-like protein 105, found in Arabidopsis thaliana (Mouse-ear cress).